Consider the following 267-residue polypeptide: Undecaprenyl-diphosphatase (267 aa).

Transmembrane regions (helical) follow at residues 1 to 21 (MPLL…FLPV), 40 to 60 (GQAI…LFFW), 85 to 105 (LALG…FLYF), 112 to 132 (LRSV…LYIA), 188 to 208 (IAML…GTEV), 219 to 239 (DMGI…ALMM), and 245 to 265 (VSFT…LFIA).

This sequence belongs to the UppP family.

The protein resides in the cell inner membrane. The catalysed reaction is di-trans,octa-cis-undecaprenyl diphosphate + H2O = di-trans,octa-cis-undecaprenyl phosphate + phosphate + H(+). Functionally, catalyzes the dephosphorylation of undecaprenyl diphosphate (UPP). Confers resistance to bacitracin. The chain is Undecaprenyl-diphosphatase from Ruegeria sp. (strain TM1040) (Silicibacter sp.).